Reading from the N-terminus, the 522-residue chain is Maturase K (522 aa).

Belongs to the intron maturase 2 family. MatK subfamily.

Its subcellular location is the plastid. It is found in the chloroplast. In terms of biological role, usually encoded in the trnK tRNA gene intron. Probably assists in splicing its own and other chloroplast group II introns. The polypeptide is Maturase K (Iris tenax (Oregon iris)).